We begin with the raw amino-acid sequence, 377 residues long: Glutamate 5-kinase (377 aa).

Lys22 contributes to the ATP binding site. Substrate is bound by residues Ser62, Asp149, and Asn161. ATP-binding positions include 181–182 and 223–229; these read TD and TGGMVTK. Positions 285-363 constitute a PUA domain; the sequence is RGTIVVDAGA…AQLKRFLGPQ (79 aa).

This sequence belongs to the glutamate 5-kinase family.

It is found in the cytoplasm. It carries out the reaction L-glutamate + ATP = L-glutamyl 5-phosphate + ADP. Its pathway is amino-acid biosynthesis; L-proline biosynthesis; L-glutamate 5-semialdehyde from L-glutamate: step 1/2. Its function is as follows. Catalyzes the transfer of a phosphate group to glutamate to form L-glutamate 5-phosphate. This Bifidobacterium longum (strain DJO10A) protein is Glutamate 5-kinase.